The following is a 233-amino-acid chain: Somatolactin (233 aa).

Residues 1 to 24 form the signal peptide; sequence MNMMQVMQSVVWAVLLWPCLVSLG. 3 disulfide bridges follow: Cys-29–Cys-39, Cys-89–Cys-205, and Cys-222–Cys-230.

This sequence belongs to the somatotropin/prolactin family. Pituitary gland.

It localises to the secreted. Functionally, may be associated with ion regulation and reproduction. This Oncorhynchus keta (Chum salmon) protein is Somatolactin.